Reading from the N-terminus, the 132-residue chain is Small ribosomal subunit protein eS6 (132 aa).

The protein belongs to the eukaryotic ribosomal protein eS6 family.

This Methanoculleus marisnigri (strain ATCC 35101 / DSM 1498 / JR1) protein is Small ribosomal subunit protein eS6.